A 387-amino-acid polypeptide reads, in one-letter code: 3-hydroxy-D-aspartate aldolase (387 aa).

Lys62 carries the N6-(pyridoxal phosphate)lysine modification. Residues Gln85, Thr238, 256-257 (GS), and Tyr265 contribute to the pyridoxal 5'-phosphate site. The Mg(2+) site is built by His355 and Asp357.

It belongs to the DSD1 family. Homodimer. The cofactor is pyridoxal 5'-phosphate. Requires Mg(2+) as cofactor.

It catalyses the reaction (3S)-3-hydroxy-D-aspartate = glyoxylate + glycine. The catalysed reaction is (3R)-3-hydroxy-D-aspartate = glyoxylate + glycine. In terms of biological role, catalyzes the condensation of glyoxylate and glycine into (2R,3S)-beta-hydroxyaspartate ((3S)-3-hydroxy-D-aspartate). Is essential for the growth of P.denitrificans in the presence of glycolate and glyoxylate since it functions in glyoxylate assimilation via the beta-hydroxyaspartate cycle (BHAC). Is also able to catalyze the reverse reaction in vitro, i.e. the cleavage of (3S)-3-hydroxy-D-aspartate, and that of D-threonine to a lesser extent. This is 3-hydroxy-D-aspartate aldolase from Paracoccus denitrificans (strain Pd 1222).